Reading from the N-terminus, the 711-residue chain is DNA topoisomerase 3 (711 aa).

Residues 2-135 (KSLILAEKPS…IKRLWISSVT (134 aa)) enclose the Toprim domain. Mg(2+)-binding residues include Glu-8 and Asp-104. The 429-residue stretch at 152 to 580 (FQHLYEAALA…EMKAFTQSIV (429 aa)) folds into the Topo IA-type catalytic domain. Positions 186–191 (SLGRVQ) are interaction with DNA. Tyr-305 (O-(5'-phospho-DNA)-tyrosine intermediate) is an active-site residue. Positions 672–699 (KRFKNKSSGKVSKKEMKKYMNNEDSLEN) are disordered. Residues 683–692 (SKKEMKKYMN) show a composition bias toward basic and acidic residues.

Belongs to the type IA topoisomerase family. It depends on Mg(2+) as a cofactor.

It carries out the reaction ATP-independent breakage of single-stranded DNA, followed by passage and rejoining.. Its function is as follows. Releases the supercoiling and torsional tension of DNA, which is introduced during the DNA replication and transcription, by transiently cleaving and rejoining one strand of the DNA duplex. Introduces a single-strand break via transesterification at a target site in duplex DNA. The scissile phosphodiester is attacked by the catalytic tyrosine of the enzyme, resulting in the formation of a DNA-(5'-phosphotyrosyl)-enzyme intermediate and the expulsion of a 3'-OH DNA strand. The free DNA strand then undergoes passage around the unbroken strand, thus removing DNA supercoils. Finally, in the religation step, the DNA 3'-OH attacks the covalent intermediate to expel the active-site tyrosine and restore the DNA phosphodiester backbone. The chain is DNA topoisomerase 3 from Staphylococcus haemolyticus (strain JCSC1435).